Consider the following 798-residue polypeptide: PR domain zinc finger protein 4 (798 aa).

The 118-residue stretch at 408-525 (KQLVLRQSIV…PENELLFYYS (118 aa)) folds into the SET domain. 5 C2H2-type zinc fingers span residues 586–608 (WKCSMCPQAFISPSKLHVHFMGH), 614–636 (HKCDFCSKAFSDPSNLRTHLKIH), 642–664 (YRCTLCDKSFTQKAHLESHMVIH), 670–692 (LKCDYCDKLFMRRQDLKQHVLIH), and 698–720 (IKCPKCDKLFLRTNHLKKHLNSH). The C2H2-type 6; degenerate zinc-finger motif lies at 726–747 (YVCEKCTKAYLTKYHLTRHLKA). Residues 750–798 (EPASSSSAQDDEDEDGDSGEDGLPGSMTTEGCRMSSAVYSADESLSAHK) are disordered. Acidic residues predominate over residues 758–769 (QDDEDEDGDSGE).

This sequence belongs to the class V-like SAM-binding methyltransferase superfamily.

The protein resides in the nucleus. In terms of biological role, may function as a transcription factor involved in cell differentiation. The polypeptide is PR domain zinc finger protein 4 (Prdm4) (Rattus norvegicus (Rat)).